Consider the following 161-residue polypeptide: Phosphopantetheine adenylyltransferase (161 aa).

Ser-11 contacts substrate. ATP is bound by residues 11–12 (SF) and His-19. Residues Lys-43, Leu-75, and Arg-89 each contribute to the substrate site. ATP is bound by residues 90–92 (GLR), Glu-100, and 125–131 (YSFISSS).

It belongs to the bacterial CoaD family. As to quaternary structure, homohexamer. It depends on Mg(2+) as a cofactor.

The protein resides in the cytoplasm. It catalyses the reaction (R)-4'-phosphopantetheine + ATP + H(+) = 3'-dephospho-CoA + diphosphate. The protein operates within cofactor biosynthesis; coenzyme A biosynthesis; CoA from (R)-pantothenate: step 4/5. Functionally, reversibly transfers an adenylyl group from ATP to 4'-phosphopantetheine, yielding dephospho-CoA (dPCoA) and pyrophosphate. In Staphylococcus haemolyticus (strain JCSC1435), this protein is Phosphopantetheine adenylyltransferase.